A 264-amino-acid polypeptide reads, in one-letter code: Thymidylate synthase (264 aa).

Arginine 21 is a dUMP binding site. Position 51 (histidine 51) interacts with (6R)-5,10-methylene-5,6,7,8-tetrahydrofolate. 126 to 127 (RR) contacts dUMP. The active-site Nucleophile is cysteine 146. DUMP-binding positions include 166–169 (RSCD), asparagine 177, and 207–209 (HLY). A (6R)-5,10-methylene-5,6,7,8-tetrahydrofolate-binding site is contributed by aspartate 169. Alanine 263 is a binding site for (6R)-5,10-methylene-5,6,7,8-tetrahydrofolate.

It belongs to the thymidylate synthase family. Bacterial-type ThyA subfamily. Homodimer.

The protein resides in the cytoplasm. The catalysed reaction is dUMP + (6R)-5,10-methylene-5,6,7,8-tetrahydrofolate = 7,8-dihydrofolate + dTMP. The protein operates within pyrimidine metabolism; dTTP biosynthesis. Functionally, catalyzes the reductive methylation of 2'-deoxyuridine-5'-monophosphate (dUMP) to 2'-deoxythymidine-5'-monophosphate (dTMP) while utilizing 5,10-methylenetetrahydrofolate (mTHF) as the methyl donor and reductant in the reaction, yielding dihydrofolate (DHF) as a by-product. This enzymatic reaction provides an intracellular de novo source of dTMP, an essential precursor for DNA biosynthesis. The protein is Thymidylate synthase of Shigella boydii serotype 4 (strain Sb227).